The primary structure comprises 108 residues: UPF0060 membrane protein YnfA (108 aa).

The Periplasmic segment spans residues 1-5; that stretch reads MIKTT. Residues 6–26 traverse the membrane as a helical segment; it reads LLFFATALCEIIGCFLPWLWL. The Cytoplasmic segment spans residues 27-30; the sequence is KRNA. A helical membrane pass occupies residues 31 to 51; that stretch reads SIWLLLPAGISLALFVWLLTL. At 52–60 the chain is on the periplasmic side; the sequence is HPAASGRVY. A helical transmembrane segment spans residues 61–81; the sequence is AAYGGVYVCTALMWLRVVDGV. Topologically, residues 82–84 are cytoplasmic; the sequence is KLT. A helical transmembrane segment spans residues 85 to 105; the sequence is LYDWTGPLIALCGMLIIVVGW. Topologically, residues 106 to 108 are periplasmic; sequence GRT.

This sequence belongs to the UPF0060 family.

The protein resides in the cell inner membrane. This is UPF0060 membrane protein YnfA from Escherichia coli O157:H7.